The following is a 655-amino-acid chain: Probable replication restart protein PriA (655 aa).

8 residues coordinate Zn(2+): Cys-368, Cys-371, Cys-377, Cys-380, Cys-396, Cys-399, Cys-408, and Cys-411.

The protein belongs to the helicase family. PriA subfamily. As to quaternary structure, component of the replication restart primosome. Zn(2+) is required as a cofactor.

Its function is as follows. Initiates the restart of stalled replication forks, which reloads the replicative helicase on sites other than the origin of replication. Recognizes and binds to abandoned replication forks and remodels them to uncover a helicase loading site. Promotes assembly of the primosome at these replication forks. The polypeptide is Probable replication restart protein PriA (Mycobacterium bovis (strain ATCC BAA-935 / AF2122/97)).